An 85-amino-acid polypeptide reads, in one-letter code: 4-hydroxyphenylacetate decarboxylase small subunit (85 aa).

[4Fe-4S] cluster-binding residues include H4, C7, C20, C34, C43, C46, C60, and C78.

Belongs to the HPA decarboxylase small subunit family. Heterooctamer consisting of 4 large (HpdB) subunits and 4 small (HpdC) subunits, arranged as a tetramer of heterodimers. It depends on [4Fe-4S] cluster as a cofactor.

It catalyses the reaction 4-hydroxyphenylacetate + H(+) = 4-methylphenol + CO2. The catalysed reaction is 3,4-dihydroxyphenylacetate + H(+) = 4-methylcatechol + CO2. Component of the HPA decarboxylase that decarboxylates phenylacetates with a hydroxyl group in the p-position. Active toward 4-hydroxyphenylacetate and 3,4-dihydroxyphenylacetate, forming 4-methylphenol and 4-methylcatechol, respectively. Is likely involved in the catabolism of aromatic amino acids such as tyrosine fermentation. 4-methylphenol (p-cresol) formation provides metabolic toxicity, which allows an active suppression of other microbes and may provide growth advantages for the producers in highly competitive environments. The small subunit is essential for enzymatic activity of HPA decarboxylase, and also seems to be involved in the regulation of the enzyme oligomeric state and catalytic activity. This chain is 4-hydroxyphenylacetate decarboxylase small subunit, found in Clostridioides difficile (strain 630) (Peptoclostridium difficile).